We begin with the raw amino-acid sequence, 222 residues long: Cytidylate kinase (222 aa).

Position 10–18 (10–18 (GPSASGKGT)) interacts with ATP.

The protein belongs to the cytidylate kinase family. Type 1 subfamily.

It localises to the cytoplasm. The catalysed reaction is CMP + ATP = CDP + ADP. It catalyses the reaction dCMP + ATP = dCDP + ADP. This chain is Cytidylate kinase, found in Chromobacterium violaceum (strain ATCC 12472 / DSM 30191 / JCM 1249 / CCUG 213 / NBRC 12614 / NCIMB 9131 / NCTC 9757 / MK).